The primary structure comprises 493 residues: Ubiquitin carboxyl-terminal hydrolase 14 (493 aa).

The Ubiquitin-like domain occupies 4 to 80 (YSVTVKWGKE…MMGSADALPE (77 aa)). Phosphothreonine is present on threonine 52. Positions 105–483 (CGLTNLGNTC…IAYVLLYGPR (379 aa)) constitute a USP domain. Cysteine 114 (nucleophile) is an active-site residue. Phosphoserine is present on residues serine 143 and serine 148. Position 235 is a phosphothreonine (threonine 235). Residues serine 237, serine 302, and serine 432 each carry the phosphoserine modification. Histidine 435 acts as the Proton acceptor in catalysis. Residue lysine 449 is modified to N6-acetyllysine.

Belongs to the peptidase C19 family. USP14/UBP6 subfamily. In terms of assembly, homodimer (Potential). Associates with the 26S proteasome. Interacts with FANCC, CXCR4 and ERN1. Interacts with TRIM14; this interaction recruits USP14 to cleave ubiquitin chains of CGAS and KDM4D.

Its subcellular location is the cytoplasm. The protein resides in the cell membrane. It carries out the reaction Thiol-dependent hydrolysis of ester, thioester, amide, peptide and isopeptide bonds formed by the C-terminal Gly of ubiquitin (a 76-residue protein attached to proteins as an intracellular targeting signal).. Functionally, proteasome-associated deubiquitinase which releases ubiquitin from the proteasome targeted ubiquitinated proteins. Ensures the regeneration of ubiquitin at the proteasome. Is a reversibly associated subunit of the proteasome and a large fraction of proteasome-free protein exists within the cell. Required for the degradation of the chemokine receptor CXCR4 which is critical for CXCL12-induced cell chemotaxis. Also serves as a physiological inhibitor of endoplasmic reticulum-associated degradation (ERAD) under the non-stressed condition by inhibiting the degradation of unfolded endoplasmic reticulum proteins via interaction with ERN1. Indispensable for synaptic development and function at neuromuscular junctions (NMJs). Plays a role in the innate immune defense against viruses by stabilizing the viral DNA sensor CGAS and thus inhibiting its autophagic degradation. Inhibits OPTN-mediated selective autophagic degradation of KDM4D and thereby negatively regulates H3K9me2 and H3K9me3. The chain is Ubiquitin carboxyl-terminal hydrolase 14 (USP14) from Pan troglodytes (Chimpanzee).